Reading from the N-terminus, the 108-residue chain is ER membrane protein complex subunit 6 (108 aa).

3 helical membrane passes run 21–41 (VVSF…GILG), 45–65 (YEGL…LFAL), and 86–106 (ILDG…LVYV).

This sequence belongs to the EMC6 family.

The protein localises to the endoplasmic reticulum membrane. The protein is ER membrane protein complex subunit 6 of Schizosaccharomyces pombe (strain 972 / ATCC 24843) (Fission yeast).